The primary structure comprises 707 residues: Lipase maturation factor 2 (707 aa).

10 helical membrane passes run 10 to 30 (AFLWGLSGIYLFAFVSLYVQI), 78 to 98 (MELICLLGALLSLGALLFSCL), 102 to 122 (LVFLLLWVFYLSLYQVGQVFL), 126 to 146 (WDSLLLETGFLAILVAPLHAM), 158 to 178 (GVTFWLTRWLLFRLMFASGVV), 220 to 240 (FSVVATFFIEIGVPWLFFLPF), 256 to 276 (ILIIITGNYNFFNLLTIVLCC), 309 to 329 (LVSLLEIPIFGLLVFWTVKYF), 358 to 378 (ITFPSIWIAAASLGWEILKGM), and 395 to 415 (LQWLMFSCAAAAMFTISLVPY). Asn483 carries an N-linked (GlcNAc...) asparagine glycan. Residues 634–654 (LLLHSFIFGIFTIYFLQAMFG) form a helical membrane-spanning segment. Positions 661 to 707 (VAKQRHSMPPNEKKKQKPNSGQGESASSKSSGHGTDTVRRNKKNEKS) are disordered. Positions 680 to 694 (SGQGESASSKSSGHG) are enriched in low complexity. Residues 696-707 (DTVRRNKKNEKS) are compositionally biased toward basic and acidic residues.

Belongs to the lipase maturation factor family.

The protein resides in the endoplasmic reticulum membrane. Functionally, involved in the maturation of specific proteins in the endoplasmic reticulum. In Xenopus laevis (African clawed frog), this protein is Lipase maturation factor 2 (lmf2).